The sequence spans 727 residues: Glycerol-3-phosphate dehydrogenase, mitochondrial (727 aa).

Residues 1–42 constitute a mitochondrion transit peptide; sequence MAFQKAVKGTILVGGGALATVLGLSHFAHYKRKQVNLAFVEA. 71–99 is an FAD binding site; it reads DVLVIGGGATGSGCALDAVTRGLKTALVE. A Phosphotyrosine modification is found at Tyr-601. EF-hand domains lie at 623-658 and 659-694; these read SDID…IGVQ and MDEN…IQKG. Ca(2+) is bound by residues Asp-672, Asn-674, Asn-676, Gln-678, and Glu-683.

Belongs to the FAD-dependent glycerol-3-phosphate dehydrogenase family. FAD serves as cofactor.

The protein resides in the mitochondrion. The catalysed reaction is a quinone + sn-glycerol 3-phosphate = dihydroxyacetone phosphate + a quinol. It functions in the pathway polyol metabolism; glycerol degradation via glycerol kinase pathway; glycerone phosphate from sn-glycerol 3-phosphate (aerobic route): step 1/1. With respect to regulation, calcium-binding enhance the activity of the enzyme. Its function is as follows. Calcium-responsive mitochondrial glycerol-3-phosphate dehydrogenase which seems to be a key component of the pancreatic beta-cell glucose-sensing device. This is Glycerol-3-phosphate dehydrogenase, mitochondrial (GPD2) from Bos taurus (Bovine).